Consider the following 348-residue polypeptide: Nuclear receptor subfamily 1 group I member 3 (348 aa).

The segment at residues 8 to 83 (LRNCVVCGDQ…AGMRKDMILS (76 aa)) is a DNA-binding region (nuclear receptor). An NR C4-type zinc finger spans residues 11 to 31 (CVVCGDQATGYHFNALTCEGC). Phosphothreonine; by PKC is present on Thr38. An NR C4-type zinc finger spans residues 47–71 (CPFAGSCEVSKTQRRHCPACRLQKC). Residues 109–348 (EQEELIRTLL…MMPLLQEICS (240 aa)) form the NR LBD domain.

It belongs to the nuclear hormone receptor family. NR1 subfamily. In terms of assembly, heterodimer of NR1I3 and RXR. Interacts with PSMC4. Interacts with ECT2. Directly interacts with DNAJC7; this complex may also include HSP90. Interacts with CRY1. Interacts with CRY2 in a ligand-dependent manner. Phosphorylated at Thr-38 by PKC, dephosphorylation of Thr-38 is required for nuclear translocation and activation.

Its subcellular location is the nucleus. The protein resides in the cytoplasm. It is found in the cytoskeleton. Functionally, binds and transactivates the retinoic acid response elements that control expression of the retinoic acid receptor beta 2 and alcohol dehydrogenase 3 genes. Transactivates both the phenobarbital responsive element module of the human CYP2B6 gene and the CYP3A4 xenobiotic response element. This chain is Nuclear receptor subfamily 1 group I member 3 (NR1I3), found in Pan troglodytes (Chimpanzee).